The chain runs to 252 residues: MQIFHNLNEWIHFRNTLSPDLSLGFAPTMGNLHAGHASLFLASSKENHYTVSSLFVNPTQFNNPDDYKHYPRTVDADLELMTQNGVDFCILPNENEIYTDGYAYQVQENRLGQLMEGKHRPGHFNGVLTIVMKLFNLVKPTRAYFGEKDYQQLLLIQGMVKALFMDIEIKSCPTVREKSGLACSSRNNRLTPSQREIADEFAKIFHQNKSSAMISKELEALGITVEYIEEFQGRRFAAVKIGDIRLIDNYLL.

29 to 36 (MGNLHAGH) contributes to the ATP binding site. The active-site Proton donor is the histidine 36. Position 60 (glutamine 60) interacts with (R)-pantoate. Residue glutamine 60 participates in beta-alanine binding. ATP is bound at residue 146–149 (GEKD). Residue glutamine 152 participates in (R)-pantoate binding. Residues valine 175 and 183-186 (CSSR) contribute to the ATP site.

It belongs to the pantothenate synthetase family. In terms of assembly, homodimer.

It localises to the cytoplasm. The enzyme catalyses (R)-pantoate + beta-alanine + ATP = (R)-pantothenate + AMP + diphosphate + H(+). It participates in cofactor biosynthesis; (R)-pantothenate biosynthesis; (R)-pantothenate from (R)-pantoate and beta-alanine: step 1/1. Catalyzes the condensation of pantoate with beta-alanine in an ATP-dependent reaction via a pantoyl-adenylate intermediate. The chain is Pantothenate synthetase from Legionella pneumophila subsp. pneumophila (strain Philadelphia 1 / ATCC 33152 / DSM 7513).